The sequence spans 431 residues: Transcription factor Sp7 (431 aa).

Residues Ser30 to Ala56 are disordered. Lys41 and Lys45 each carry N6-propionyllysine. A Glycyl lysine isopeptide (Lys-Gly) (interchain with G-Cter in ubiquitin) cross-link involves residue Lys58. 2 disordered regions span residues Thr71–Gly115 and Thr154–Tyr260. The 9aaTAD motif lies at Thr156–Gly164. A compositionally biased stretch (gly residues) spans Asn166–Leu178. A Glycyl lysine isopeptide (Lys-Gly) (interchain with G-Cter in ubiquitin) cross-link involves residue Lys230. 3 consecutive C2H2-type zinc fingers follow at residues His294–His318, Phe324–His348, and Phe354–His376. 2 positions are modified to N6-propionyllysine: Lys361 and Lys371. Positions Asp367–Ile431 are disordered. Polar residues predominate over residues Ser403 to Pro412.

Belongs to the Sp1 C2H2-type zinc-finger protein family. As to quaternary structure, interacts with RIOX1; the interaction is direct and inhibits transcription activator activity. In terms of processing, ubiquitination at leads to proteasomal degradation. SP7 is a short-live protein with an endogenous half-life of approximately 12 hours. Post-translationally, propionylated. Depropionylation at Lys-371 by SIRT7 activates transcription factor activity and positively regulates bone formation by osteoblasts. As to expression, restricted to bone-derived cell.

The protein localises to the nucleus. Transcriptional activator essential for osteoblast differentiation. Binds to SP1 and EKLF consensus sequences and to other G/C-rich sequences. This chain is Transcription factor Sp7 (SP7), found in Homo sapiens (Human).